The sequence spans 50 residues: Peptide encoded by miPEP319a (50 aa).

Functionally, regulatory peptide encoded by the primary transcript (pri-miR319a) of the microRNA miR319a that enhances the accumulation of its corresponding mature miRNA. Acts probably as a transcriptional activator of its corresponding pri-miRNA. In Arabidopsis thaliana (Mouse-ear cress), this protein is Peptide encoded by miPEP319a.